Reading from the N-terminus, the 296-residue chain is Ribosomal protein L11 methyltransferase (296 aa).

Thr-139, Gly-163, Asp-185, and Asn-232 together coordinate S-adenosyl-L-methionine.

The protein belongs to the methyltransferase superfamily. PrmA family.

The protein resides in the cytoplasm. It catalyses the reaction L-lysyl-[protein] + 3 S-adenosyl-L-methionine = N(6),N(6),N(6)-trimethyl-L-lysyl-[protein] + 3 S-adenosyl-L-homocysteine + 3 H(+). Functionally, methylates ribosomal protein L11. The polypeptide is Ribosomal protein L11 methyltransferase (Rippkaea orientalis (strain PCC 8801 / RF-1) (Cyanothece sp. (strain PCC 8801))).